Reading from the N-terminus, the 253-residue chain is Imidazole glycerol phosphate synthase subunit HisF (253 aa).

Residues Asp11 and Asp130 contribute to the active site.

It belongs to the HisA/HisF family. In terms of assembly, heterodimer of HisH and HisF.

The protein localises to the cytoplasm. The catalysed reaction is 5-[(5-phospho-1-deoxy-D-ribulos-1-ylimino)methylamino]-1-(5-phospho-beta-D-ribosyl)imidazole-4-carboxamide + L-glutamine = D-erythro-1-(imidazol-4-yl)glycerol 3-phosphate + 5-amino-1-(5-phospho-beta-D-ribosyl)imidazole-4-carboxamide + L-glutamate + H(+). The protein operates within amino-acid biosynthesis; L-histidine biosynthesis; L-histidine from 5-phospho-alpha-D-ribose 1-diphosphate: step 5/9. Its function is as follows. IGPS catalyzes the conversion of PRFAR and glutamine to IGP, AICAR and glutamate. The HisF subunit catalyzes the cyclization activity that produces IGP and AICAR from PRFAR using the ammonia provided by the HisH subunit. The chain is Imidazole glycerol phosphate synthase subunit HisF from Acetivibrio thermocellus (strain ATCC 27405 / DSM 1237 / JCM 9322 / NBRC 103400 / NCIMB 10682 / NRRL B-4536 / VPI 7372) (Clostridium thermocellum).